A 33-amino-acid polypeptide reads, in one-letter code: Tail virion protein G9P (33 aa).

A helical membrane pass occupies residues 5–25; the sequence is VGSFLGAYFLGFALFYGIGFF.

The protein belongs to the inovirus G9P protein family.

It is found in the virion. It localises to the host membrane. In terms of biological role, may initiate with G7P the virion concomitant assembly-budding process, by interacting with the packaging signal of the viral genome. The assembly-budding takes place at the host inner membrane. In turn, G7P and G9P are present at the end of the filamentous virion that emerges first from the bacterial host. This chain is Tail virion protein G9P (IX), found in Salmonella phage IKe (Bacteriophage IKe).